A 507-amino-acid chain; its full sequence is 2,3-bisphosphoglycerate-independent phosphoglycerate mutase (507 aa).

Positions 13 and 63 each coordinate Mn(2+). The active-site Phosphoserine intermediate is S63. Substrate contacts are provided by residues H122, 152 to 153 (RD), R184, R190, 256 to 259 (RADR), and K330. Mn(2+) contacts are provided by D397, H401, D438, H439, and H457.

The protein belongs to the BPG-independent phosphoglycerate mutase family. Monomer. Mn(2+) is required as a cofactor.

It catalyses the reaction (2R)-2-phosphoglycerate = (2R)-3-phosphoglycerate. Its pathway is carbohydrate degradation; glycolysis; pyruvate from D-glyceraldehyde 3-phosphate: step 3/5. Functionally, catalyzes the interconversion of 2-phosphoglycerate and 3-phosphoglycerate. This is 2,3-bisphosphoglycerate-independent phosphoglycerate mutase from Chromobacterium violaceum (strain ATCC 12472 / DSM 30191 / JCM 1249 / CCUG 213 / NBRC 12614 / NCIMB 9131 / NCTC 9757 / MK).